Here is a 623-residue protein sequence, read N- to C-terminus: Fanconi anemia group G protein homolog (623 aa).

TPR repeat units lie at residues 251 to 284 (VQVY…GTTC), 349 to 382 (SQAK…LLGG), 458 to 491 (SATH…LFRT), and 517 to 550 (VAAL…CPGN).

Belongs to the multisubunit FA complex composed of FANCA, FANCB, FANCC, FANCE, FANCF, FANCG, FANCL/PHF9 and FANCM. In complex with FANCF, FANCA and FANCL, but not with FANCC, nor FANCE, interacts with HES1; this interaction may be essential for the stability and nuclear localization of FA core complex proteins. The complex with FANCC and FANCG may also include EIF2AK2 and HSP70. As to expression, highest expression levels in spleen, thymus and testis.

Its subcellular location is the nucleus. Functionally, DNA repair protein that may operate in a postreplication repair or a cell cycle checkpoint function. May be implicated in interstrand DNA cross-link repair and in the maintenance of normal chromosome stability. Candidate tumor suppressor gene. The chain is Fanconi anemia group G protein homolog (Fancg) from Mus musculus (Mouse).